A 400-amino-acid polypeptide reads, in one-letter code: Enoyl-[acyl-carrier-protein] reductase [NADH] (400 aa).

NAD(+) contacts are provided by residues 48 to 53 (GSSSGY), 74 to 75 (FE), 111 to 112 (DA), and 139 to 140 (LA). Residue tyrosine 225 participates in substrate binding. Tyrosine 235 acts as the Proton donor in catalysis. NAD(+)-binding positions include lysine 244 and 273–275 (VVT).

The protein belongs to the TER reductase family. As to quaternary structure, monomer.

The enzyme catalyses a 2,3-saturated acyl-[ACP] + NAD(+) = a (2E)-enoyl-[ACP] + NADH + H(+). It participates in lipid metabolism; fatty acid biosynthesis. In terms of biological role, involved in the final reduction of the elongation cycle of fatty acid synthesis (FAS II). Catalyzes the reduction of a carbon-carbon double bond in an enoyl moiety that is covalently linked to an acyl carrier protein (ACP). The protein is Enoyl-[acyl-carrier-protein] reductase [NADH] of Shewanella loihica (strain ATCC BAA-1088 / PV-4).